A 517-amino-acid polypeptide reads, in one-letter code: Glutamate--cysteine ligase (517 aa).

This sequence belongs to the glutamate--cysteine ligase type 1 family. Type 1 subfamily.

It carries out the reaction L-cysteine + L-glutamate + ATP = gamma-L-glutamyl-L-cysteine + ADP + phosphate + H(+). It functions in the pathway sulfur metabolism; glutathione biosynthesis; glutathione from L-cysteine and L-glutamate: step 1/2. The polypeptide is Glutamate--cysteine ligase (Pectobacterium atrosepticum (strain SCRI 1043 / ATCC BAA-672) (Erwinia carotovora subsp. atroseptica)).